A 490-amino-acid polypeptide reads, in one-letter code: Betaine aldehyde dehydrogenase (490 aa).

3 residues coordinate K(+): T26, I27, and D93. Position 150–152 (150–152) interacts with NAD(+); the sequence is GAW. K162 serves as the catalytic Charge relay system. 176–179 contacts NAD(+); that stretch reads KPSE. V180 serves as a coordination point for K(+). 230 to 233 provides a ligand contact to NAD(+); the sequence is GVAS. Position 246 (L246) interacts with K(+). E252 acts as the Proton acceptor in catalysis. Residues G254, C286, and E387 each coordinate NAD(+). The active-site Nucleophile is C286. Residue C286 is modified to Cysteine sulfenic acid (-SOH). Residues K457 and G460 each coordinate K(+). Catalysis depends on E464, which acts as the Charge relay system.

It belongs to the aldehyde dehydrogenase family. As to quaternary structure, dimer of dimers. The cofactor is K(+).

It catalyses the reaction betaine aldehyde + NAD(+) + H2O = glycine betaine + NADH + 2 H(+). It functions in the pathway amine and polyamine biosynthesis; betaine biosynthesis via choline pathway; betaine from betaine aldehyde: step 1/1. Its function is as follows. Involved in the biosynthesis of the osmoprotectant glycine betaine. Catalyzes the irreversible oxidation of betaine aldehyde to the corresponding acid. The protein is Betaine aldehyde dehydrogenase of Escherichia coli O8 (strain IAI1).